Reading from the N-terminus, the 421-residue chain is MTEKLLQMMQEKGYFNQHKKVLVAVSGGADSMSLLHFLYNHQKDLDIQLGIAHVNHKQRQESEYEENYLRHWAKEHKVPFHYSAFSGKFSENAARTFRYDFFKRIMKEADYSALVTAHHADDQAETIFMRLLRGSRLRHLSGICDVRSFGTGQIIRPFLHIPKDQLPVTFHFEDRSNSSLAYLRNRIRLTYLPTLSQENPKFKEHLCLLADEIALMDKALEELTKDITITDLSVFQQQTDAVQHLLIQSYLESFPDLQLSKGQFNQLMSFLRKKTSGKMPLKNGYVLVKTQTDFLITKEEPISLSSPSLLEFGKSIVFEEYLLTFSEPHVVSNVDTINIWSDAPIVIRHRHEGDRIDLGTHHKKIRRLFIDNKISEKDRQKAIIGEQDGQIIFLYVAGRLYLKKRPKNAILYGTVVIYKKF.

26–31 (SGGADS) serves as a coordination point for ATP.

Belongs to the tRNA(Ile)-lysidine synthase family.

It is found in the cytoplasm. The enzyme catalyses cytidine(34) in tRNA(Ile2) + L-lysine + ATP = lysidine(34) in tRNA(Ile2) + AMP + diphosphate + H(+). Its function is as follows. Ligates lysine onto the cytidine present at position 34 of the AUA codon-specific tRNA(Ile) that contains the anticodon CAU, in an ATP-dependent manner. Cytidine is converted to lysidine, thus changing the amino acid specificity of the tRNA from methionine to isoleucine. This Streptococcus thermophilus (strain CNRZ 1066) protein is tRNA(Ile)-lysidine synthase.